A 313-amino-acid polypeptide reads, in one-letter code: 2,3-dihydroxyphenylpropionate/2,3-dihydroxicinnamic acid 1,2-dioxygenase (313 aa).

H115 acts as the Proton donor in catalysis. H179 (proton acceptor) is an active-site residue.

This sequence belongs to the LigB/MhpB extradiol dioxygenase family. Homotetramer. Fe(2+) is required as a cofactor.

It catalyses the reaction 3-(2,3-dihydroxyphenyl)propanoate + O2 = (2Z,4E)-2-hydroxy-6-oxonona-2,4-dienedioate + H(+). The catalysed reaction is (2E)-3-(2,3-dihydroxyphenyl)prop-2-enoate + O2 = (2Z,4E,7E)-2-hydroxy-6-oxonona-2,4,7-trienedioate + H(+). It participates in aromatic compound metabolism; 3-phenylpropanoate degradation. Its function is as follows. Catalyzes the non-heme iron(II)-dependent oxidative cleavage of 2,3-dihydroxyphenylpropionic acid and 2,3-dihydroxicinnamic acid into 2-hydroxy-6-ketononadienedioate and 2-hydroxy-6-ketononatrienedioate, respectively. This chain is 2,3-dihydroxyphenylpropionate/2,3-dihydroxicinnamic acid 1,2-dioxygenase, found in Xanthobacter autotrophicus (strain ATCC BAA-1158 / Py2).